Reading from the N-terminus, the 673-residue chain is Annexin A6 (673 aa).

Ala2 carries the N-acetylalanine modification. Ser13 carries the phosphoserine modification. 8 Annexin repeats span residues 20–91 (FDPN…GLMR), 92–163 (PPAY…VLLQ), 175–247 (DLVQ…AVVK), 251–322 (STPE…KLSG), 363–434 (FNPD…GLMM), 435–506 (PPAH…SLAT), 521–595 (EDAQ…AIVQ), and 599–670 (NKPL…ALCG). Tyr30 is modified (phosphotyrosine). N6-acetyllysine is present on residues Lys63, Lys68, Lys75, and Lys81. Residue Tyr201 is modified to Phosphotyrosine. Residues Lys306, Lys370, and Lys418 each carry the N6-acetyllysine modification. Ser422 carries the post-translational modification Phosphoserine. N6-acetyllysine is present on Lys483. Ser537 is modified (phosphoserine). Lys620 carries the post-translational modification N6-acetyllysine.

This sequence belongs to the annexin family. Phosphorylated in response to growth factor stimulation.

It is found in the cytoplasm. It localises to the melanosome. Its function is as follows. May associate with CD21. May regulate the release of Ca(2+) from intracellular stores. This is Annexin A6 (ANXA6) from Homo sapiens (Human).